The chain runs to 158 residues: Regulator of sigma D (158 aa).

This sequence belongs to the Rsd/AlgQ family. As to quaternary structure, interacts with RpoD.

It localises to the cytoplasm. Functionally, binds RpoD and negatively regulates RpoD-mediated transcription activation by preventing the interaction between the primary sigma factor RpoD with the catalytic core of the RNA polymerase and with promoter DNA. May be involved in replacement of the RNA polymerase sigma subunit from RpoD to RpoS during the transition from exponential growth to the stationary phase. This is Regulator of sigma D from Shigella dysenteriae serotype 1 (strain Sd197).